Reading from the N-terminus, the 417-residue chain is Phosphoglycerate kinase (417 aa).

(2R)-3-phosphoglycerate contacts are provided by Val-23, Asp-24, Phe-25, Asn-26, Gln-39, Arg-40, Ser-63, His-64, Gly-66, Arg-67, Leu-122, Arg-123, His-170, and Arg-171. Residue Ser-203 is modified to Phosphoserine. Gly-214 is an ADP binding site. Gly-214 contacts CDP. Ala-215 and Lys-216 together coordinate AMP. Ala-215 contacts ATP. Ala-215 is a binding site for Mg(2+). Asp-219 lines the CDP pocket. Residue Asp-219 coordinates Mg(2+). An AMP-binding site is contributed by Lys-220. Residue Lys-220 coordinates ATP. Gly-238 is a binding site for ADP. Gly-238 lines the CDP pocket. Residues Ala-239 and Gly-313 each contribute to the AMP site. ATP contacts are provided by Ala-239 and Gly-313. The CDP site is built by Gly-338 and Phe-343. Residue Phe-343 participates in ADP binding. Glu-344 serves as a coordination point for AMP. ATP contacts are provided by Glu-344, Asp-375, and Thr-376. Asp-375 serves as a coordination point for Mg(2+).

The protein belongs to the phosphoglycerate kinase family. In terms of assembly, monomer. Mg(2+) serves as cofactor. Post-translationally, dephosphorylated by PTC1 and PTC2 at Ser-203; the protein is cytosolic when dephosphorylated.

It is found in the cytoplasm. It localises to the cytosol. Its subcellular location is the mitochondrion. It catalyses the reaction (2R)-3-phosphoglycerate + ATP = (2R)-3-phospho-glyceroyl phosphate + ADP. It participates in carbohydrate degradation; glycolysis; pyruvate from D-glyceraldehyde 3-phosphate: step 2/5. Catalyzes one of the two ATP producing reactions in the glycolytic pathway via the reversible conversion of 1,3-diphosphoglycerate to 3-phosphoglycerate. Both L- and D- forms of purine and pyrimidine nucleotides can be used as substrates, but the activity is much lower on pyrimidines. Negatively regulates the biosynthesis of acetyl-CoA from pyruvate in the mitochondrion and consequently also attenuates aflatoxin production. This Aspergillus flavus (strain ATCC 200026 / FGSC A1120 / IAM 13836 / NRRL 3357 / JCM 12722 / SRRC 167) protein is Phosphoglycerate kinase.